The chain runs to 687 residues: A-kinase anchor protein 8 (687 aa).

The tract at residues M1–F195 is interaction with MCM2. The interval M1–F210 is interaction with DPY30. Residue S72 is modified to Phosphoserine. A disordered region spans residues S104 to S124. Residue R109 is modified to Asymmetric dimethylarginine; alternate. R109 is subject to Omega-N-methylarginine; alternate. Residues R109–G118 show a composition bias toward gly residues. Residues R109–S201 are interaction with DDX5. The nuclear matrix targeting site stretch occupies residues R127–Y152. The disordered stretch occupies residues G189–S221. At S199 the chain carries Phosphoserine. Omega-N-methylarginine occurs at positions 233 and 277. The interval S278 to D380 is disordered. Basic and acidic residues-rich tracts occupy residues R281–G295 and P312–S321. Positions R287–K304 match the Bipartite nuclear localization signal motif. Residue K315 forms a Glycyl lysine isopeptide (Lys-Gly) (interchain with G-Cter in SUMO2) linkage. Residues S321, S326, and S337 each carry the phosphoserine modification. The span at E322 to A332 shows a compositional bias: acidic residues. The span at R336 to K358 shows a compositional bias: basic and acidic residues. An involved in chromatin-binding region spans residues R385–E448. 2 C2H2 AKAP95-type zinc fingers span residues C390–H412 and C479–H502. The involved in condensin complex recruitment stretch occupies residues S523 to T565. Residue T553 is modified to Phosphothreonine. Residue K563 forms a Glycyl lysine isopeptide (Lys-Gly) (interchain with G-Cter in SUMO2) linkage. An RII-binding region spans residues E568–V585. The required for interaction with MYCBP stretch occupies residues E572–G589. Residues V606 to E687 are disordered. Positions R633–N648 are enriched in basic and acidic residues. A compositionally biased stretch (low complexity) spans E649–I666. At S659 the chain carries Phosphoserine.

Belongs to the AKAP95 family. Binds to dimeric RII-alpha regulatory subunit of PKA during mitosis. Interacts (via C-terminus) with FIGN. Interacts with NCAPD2, CCND1, CCND3, MCM2, RPS6KA1, PDE4A, CASP3. Interacts with DDX5, CCNE1. Interacts with NFKB1; detetcted in the cytoplasm. Interacts with MYCBP; MYCBP is translocated to the nucleus and the interaction prevents the association of the PKA catalytic subunit leading to suppression of PKA activity. Interacts with DPY30; mediating AKAP8 association with at least the MLL4/WBP7 HMT complex. Interacts with HDAC3; increased during mitosis. Interacts with GJA1; in the nucleus and in the nuclear membrane; the nuclear association increases with progress of cell cycle G1, S and G2 phase and decreases in M phase. Phosphorylated on tyrosine residues probably by SRC subfamily protein kinases; multiple phosphorylation is leading to dissociation from nuclear structures implicated in chromatin structural changes. Widely expressed. The protein has been detected in liver, fibroblasts, granulosa, myoblast, lymphoma and Sertoli cells.

The protein resides in the nucleus matrix. It is found in the nucleus. It localises to the nucleolus. Its subcellular location is the cytoplasm. Functionally, anchoring protein that mediates the subcellular compartmentation of cAMP-dependent protein kinase (PKA type II). Acts as an anchor for a PKA-signaling complex onto mitotic chromosomes, which is required for maintenance of chromosomes in a condensed form throughout mitosis. Recruits condensin complex subunit NCAPD2 to chromosomes required for chromatin condensation; the function appears to be independent from PKA-anchoring. May help to deliver cyclin D/E to CDK4 to facilitate cell cycle progression. Required for cell cycle G2/M transition and histone deacetylation during mitosis. In mitotic cells recruits HDAC3 to the vicinity of chromatin leading to deacetylation and subsequent phosphorylation at 'Ser-10' of histone H3; in this function may act redundantly with AKAP8L. Involved in nuclear retention of RPS6KA1 upon ERK activation thus inducing cell proliferation. May be involved in regulation of DNA replication by acting as scaffold for MCM2. Enhances HMT activity of the KMT2 family MLL4/WBP7 complex and is involved in transcriptional regulation. In a teratocarcinoma cell line is involved in retinoic acid-mediated induction of developmental genes implicating H3 'Lys-4' methylation. May be involved in recruitment of active CASP3 to the nucleus in apoptotic cells. May act as a carrier protein of GJA1 for its transport to the nucleus. May play a repressive role in the regulation of rDNA transcription. Preferentially binds GC-rich DNA in vitro. In cells, associates with ribosomal RNA (rRNA) chromatin, preferentially with rRNA promoter and transcribed regions. Involved in modulation of Toll-like receptor signaling. Required for the cAMP-dependent suppression of TNF-alpha in early stages of LPS-induced macrophage activation; the function probably implicates targeting of PKA to NFKB1. The chain is A-kinase anchor protein 8 (Akap8) from Rattus norvegicus (Rat).